The primary structure comprises 335 residues: Glycerol-3-phosphate dehydrogenase [NAD(P)+] (335 aa).

5 residues coordinate NADPH: S12, W13, R33, R34, and K107. Positions 107, 134, and 136 each coordinate sn-glycerol 3-phosphate. Residue A138 coordinates NADPH. Sn-glycerol 3-phosphate contacts are provided by K189, D242, S252, R253, and N254. The active-site Proton acceptor is the K189. R253 contacts NADPH. 2 residues coordinate NADPH: V277 and E279.

Belongs to the NAD-dependent glycerol-3-phosphate dehydrogenase family.

Its subcellular location is the cytoplasm. It carries out the reaction sn-glycerol 3-phosphate + NAD(+) = dihydroxyacetone phosphate + NADH + H(+). The enzyme catalyses sn-glycerol 3-phosphate + NADP(+) = dihydroxyacetone phosphate + NADPH + H(+). The protein operates within membrane lipid metabolism; glycerophospholipid metabolism. Its function is as follows. Catalyzes the reduction of the glycolytic intermediate dihydroxyacetone phosphate (DHAP) to sn-glycerol 3-phosphate (G3P), the key precursor for phospholipid synthesis. The protein is Glycerol-3-phosphate dehydrogenase [NAD(P)+] of Moorella thermoacetica (strain ATCC 39073 / JCM 9320).